A 425-amino-acid polypeptide reads, in one-letter code: Trigger factor (425 aa).

In terms of domain architecture, PPIase FKBP-type spans 163 to 248 (GDTAVIDFEG…VHEIKTKELP (86 aa)).

It belongs to the FKBP-type PPIase family. Tig subfamily.

It localises to the cytoplasm. The enzyme catalyses [protein]-peptidylproline (omega=180) = [protein]-peptidylproline (omega=0). Its function is as follows. Involved in protein export. Acts as a chaperone by maintaining the newly synthesized protein in an open conformation. Functions as a peptidyl-prolyl cis-trans isomerase. In Bacillus cereus (strain ATCC 10987 / NRS 248), this protein is Trigger factor.